The following is a 224-amino-acid chain: Small ribosomal subunit protein uS3 (224 aa).

Residues 39-107 (IREFLKKKPS…DVWVEIAEVK (69 aa)) form the KH type-2 domain.

The protein belongs to the universal ribosomal protein uS3 family. As to quaternary structure, part of the 30S ribosomal subunit. Forms a tight complex with proteins S10 and S14.

Functionally, binds the lower part of the 30S subunit head. Binds mRNA in the 70S ribosome, positioning it for translation. The sequence is that of Small ribosomal subunit protein uS3 from Chlamydia trachomatis serovar L2 (strain ATCC VR-902B / DSM 19102 / 434/Bu).